A 125-amino-acid chain; its full sequence is Small ribosomal subunit protein uS13 (125 aa).

The protein belongs to the universal ribosomal protein uS13 family. As to quaternary structure, part of the 30S ribosomal subunit. Forms a loose heterodimer with protein S19. Forms two bridges to the 50S subunit in the 70S ribosome.

In terms of biological role, located at the top of the head of the 30S subunit, it contacts several helices of the 16S rRNA. In the 70S ribosome it contacts the 23S rRNA (bridge B1a) and protein L5 of the 50S subunit (bridge B1b), connecting the 2 subunits; these bridges are implicated in subunit movement. Contacts the tRNAs in the A and P-sites. The sequence is that of Small ribosomal subunit protein uS13 from Gluconacetobacter diazotrophicus (strain ATCC 49037 / DSM 5601 / CCUG 37298 / CIP 103539 / LMG 7603 / PAl5).